Consider the following 444-residue polypeptide: Tol-Pal system protein TolB (444 aa).

The signal sequence occupies residues 1–26 (MTLFRTLAPMGLALALLLPAAVPAAA). A compositionally biased stretch (polar residues) spans 281–310 (IYTLDTGSGTRRQLTNSPSIETAPSYSPDG). Residues 281 to 311 (IYTLDTGSGTRRQLTNSPSIETAPSYSPDGS) are disordered.

The protein belongs to the TolB family. In terms of assembly, the Tol-Pal system is composed of five core proteins: the inner membrane proteins TolA, TolQ and TolR, the periplasmic protein TolB and the outer membrane protein Pal. They form a network linking the inner and outer membranes and the peptidoglycan layer.

It localises to the periplasm. Its function is as follows. Part of the Tol-Pal system, which plays a role in outer membrane invagination during cell division and is important for maintaining outer membrane integrity. This is Tol-Pal system protein TolB from Cereibacter sphaeroides (strain ATCC 17029 / ATH 2.4.9) (Rhodobacter sphaeroides).